Here is a 197-residue protein sequence, read N- to C-terminus: UPF0314 protein NGR_c32320 (197 aa).

3 consecutive transmembrane segments (helical) span residues 16 to 36 (WIWLIACLGVVAIQILTQHLM), 66 to 86 (WYTPSHIIHGFLFYGLGYLLL), and 152 to 172 (LPVAVTVTIAIVLELFTGWII).

The protein belongs to the UPF0314 family.

The protein resides in the cell membrane. The protein is UPF0314 protein NGR_c32320 of Sinorhizobium fredii (strain NBRC 101917 / NGR234).